Here is a 1407-residue protein sequence, read N- to C-terminus: DNA-directed RNA polymerase subunit beta' (1407 aa).

Residues cysteine 70, cysteine 72, cysteine 85, and cysteine 88 each coordinate Zn(2+). Mg(2+)-binding residues include aspartate 460, aspartate 462, and aspartate 464. Residues cysteine 814, cysteine 888, cysteine 895, and cysteine 898 each coordinate Zn(2+).

It belongs to the RNA polymerase beta' chain family. The RNAP catalytic core consists of 2 alpha, 1 beta, 1 beta' and 1 omega subunit. When a sigma factor is associated with the core the holoenzyme is formed, which can initiate transcription. Mg(2+) is required as a cofactor. Zn(2+) serves as cofactor.

The enzyme catalyses RNA(n) + a ribonucleoside 5'-triphosphate = RNA(n+1) + diphosphate. Its function is as follows. DNA-dependent RNA polymerase catalyzes the transcription of DNA into RNA using the four ribonucleoside triphosphates as substrates. This Salmonella choleraesuis (strain SC-B67) protein is DNA-directed RNA polymerase subunit beta'.